The primary structure comprises 374 residues: N-acetyldiaminopimelate deacetylase (374 aa).

The active site involves Asp-69. Residue Glu-128 is the Proton acceptor of the active site.

Belongs to the peptidase M20A family. N-acetyldiaminopimelate deacetylase subfamily.

It catalyses the reaction N-acetyl-(2S,6S)-2,6-diaminopimelate + H2O = (2S,6S)-2,6-diaminopimelate + acetate. Its pathway is amino-acid biosynthesis; L-lysine biosynthesis via DAP pathway; LL-2,6-diaminopimelate from (S)-tetrahydrodipicolinate (acetylase route): step 3/3. Its function is as follows. Catalyzes the conversion of N-acetyl-diaminopimelate to diaminopimelate and acetate. The protein is N-acetyldiaminopimelate deacetylase of Bacillus velezensis (strain DSM 23117 / BGSC 10A6 / LMG 26770 / FZB42) (Bacillus amyloliquefaciens subsp. plantarum).